The following is a 341-amino-acid chain: Probable GDP-mannose transporter 2 (341 aa).

Topologically, residues 1–11 (MSKHKHEWTES) are cytoplasmic. A helical transmembrane segment spans residues 12-32 (VANSGPASILSYCASSILMTV). At 33 to 46 (TNKFVVNLDNFNMN) the chain is on the lumenal side. The helical transmembrane segment at 47-67 (FVMLFVQSLVCTVTLCILRIV) threads the bilayer. Over 68–85 (GVANFRSLNRTDVKNWFP) the chain is Cytoplasmic. Residues 86-106 (ISLLLVLMIYTSLKSLQYLAV) traverse the membrane as a helical segment. Proline 107 is a topological domain (lumenal). Residues 108-128 (IYTIFKNLTIILIAYGEVLFF) form a helical membrane-spanning segment. Over 129–139 (GGKVTSMELTS) the chain is Cytoplasmic. The helical transmembrane segment at 140–160 (FIMMVLSSVVATWGDQQAIAI) threads the bilayer. Topologically, residues 161–176 (KASSLEDLDQELVEST) are lumenal. The helical transmembrane segment at 177 to 197 (IFVLNPGYLWMFTNCISSALF) threads the bilayer. The Cytoplasmic segment spans residues 198–214 (VLIMRKRIRLTNFKDYD). A helical transmembrane segment spans residues 215–235 (TMFYNNVLALPLLLVFSFIME). At 236-251 (DWSTKNLSVNLSADSL) the chain is on the lumenal side. N-linked (GlcNAc...) asparagine glycans are attached at residues asparagine 241 and asparagine 245. The helical transmembrane segment at 252-272 (AAMVISGLMSVGISYCSGWCV) threads the bilayer. Residues 273-278 (RVTSST) lie on the Cytoplasmic side of the membrane. Residues 279–299 (TYSMVGALNKLPIALAGLVFF) traverse the membrane as a helical segment. The Lumenal segment spans residues 300 to 303 (DAPK). The chain crosses the membrane as a helical span at residues 304-324 (NFLSFFSIFLGFLSGLLYAVA). The Cytoplasmic portion of the chain corresponds to 325–341 (KQKKIQQQKVLAATLEK).

It belongs to the TPT transporter family. SLC35D subfamily.

The protein localises to the golgi apparatus membrane. It localises to the cytoplasmic vesicle membrane. The protein resides in the endoplasmic reticulum membrane. In terms of biological role, involved in the import of GDP-mannose from the cytoplasm into the Golgi lumen. The polypeptide is Probable GDP-mannose transporter 2 (HVG1) (Saccharomyces cerevisiae (strain Lalvin EC1118 / Prise de mousse) (Baker's yeast)).